A 317-amino-acid polypeptide reads, in one-letter code: Glucokinase (317 aa).

6-12 (GVDIGGT) is a binding site for ATP.

It belongs to the ROK (NagC/XylR) family. Homooligomer (possibly a homotetramer). Alternatively, it may form a heterotetramer of two glucokinase subunits with two ORF2 (AC P40182) proteins.

The protein resides in the cytoplasm. It catalyses the reaction D-glucose + ATP = D-glucose 6-phosphate + ADP + H(+). In terms of biological role, a probable glucose kinase. Required for glucose repression of many different genes, restores glucose kinase activity in E.coli glk mutants. The protein is Glucokinase (glkA) of Streptomyces coelicolor (strain ATCC BAA-471 / A3(2) / M145).